We begin with the raw amino-acid sequence, 477 residues long: Glycogen synthase (477 aa).

Lysine 15 is an ADP-alpha-D-glucose binding site.

This sequence belongs to the glycosyltransferase 1 family. Bacterial/plant glycogen synthase subfamily.

It carries out the reaction [(1-&gt;4)-alpha-D-glucosyl](n) + ADP-alpha-D-glucose = [(1-&gt;4)-alpha-D-glucosyl](n+1) + ADP + H(+). The protein operates within glycan biosynthesis; glycogen biosynthesis. Functionally, synthesizes alpha-1,4-glucan chains using ADP-glucose. This Streptococcus pneumoniae (strain Hungary19A-6) protein is Glycogen synthase.